Here is a 109-residue protein sequence, read N- to C-terminus: Large ribosomal subunit protein uL24 (109 aa).

Belongs to the universal ribosomal protein uL24 family. Part of the 50S ribosomal subunit.

In terms of biological role, one of two assembly initiator proteins, it binds directly to the 5'-end of the 23S rRNA, where it nucleates assembly of the 50S subunit. One of the proteins that surrounds the polypeptide exit tunnel on the outside of the subunit. The sequence is that of Large ribosomal subunit protein uL24 from Rickettsia rickettsii (strain Iowa).